The primary structure comprises 299 residues: GTPase Era (299 aa).

The 168-residue stretch at 4 to 171 (KSGFVAILGR…VDILSENLGE (168 aa)) folds into the Era-type G domain. The tract at residues 12 to 19 (GRPNVGKS) is G1. A GTP-binding site is contributed by 12 to 19 (GRPNVGKS). Residues 38–42 (QTTRN) form a G2 region. The tract at residues 59–62 (DTPG) is G3. GTP contacts are provided by residues 59–63 (DTPGI) and 121–124 (NKID). The G4 stretch occupies residues 121-124 (NKID). Residues 150–152 (ISA) form a G5 region. A KH type-2 domain is found at 202–280 (TREEIPHSVA…FLETWVKVKK (79 aa)).

It belongs to the TRAFAC class TrmE-Era-EngA-EngB-Septin-like GTPase superfamily. Era GTPase family. In terms of assembly, monomer.

The protein resides in the cytoplasm. It localises to the cell membrane. In terms of biological role, an essential GTPase that binds both GDP and GTP, with rapid nucleotide exchange. Plays a role in 16S rRNA processing and 30S ribosomal subunit biogenesis and possibly also in cell cycle regulation and energy metabolism. The protein is GTPase Era of Streptococcus pneumoniae (strain JJA).